The following is a 230-amino-acid chain: Thiamine-triphosphatase (230 aa).

A2 bears the N-acetylalanine mark. Positions L5–F201 constitute a CYTH domain. Mg(2+) is bound by residues E7 and E9. Residues K11, R55, R57, K65, and R125 each contribute to the substrate site. Residues D145, E157, and E159 each coordinate Mg(2+). Residue E157 coordinates substrate. K193 serves as a coordination point for substrate.

The protein belongs to the ThTPase family. In terms of assembly, monomer. It depends on Mg(2+) as a cofactor. Widely expressed but at a low level.

The protein resides in the cytoplasm. The catalysed reaction is thiamine triphosphate + H2O = thiamine diphosphate + phosphate + H(+). Its function is as follows. Hydrolase highly specific for thiamine triphosphate (ThTP). This Homo sapiens (Human) protein is Thiamine-triphosphatase (THTPA).